Here is a 237-residue protein sequence, read N- to C-terminus: Ribitol-5-phosphate cytidylyltransferase (237 aa).

Residues L7–G10 and G80–T86 each bind CTP.

Belongs to the IspD/TarI cytidylyltransferase family. TarI subfamily.

It catalyses the reaction D-ribitol 5-phosphate + CTP + H(+) = CDP-L-ribitol + diphosphate. It participates in cell wall biogenesis; poly(ribitol phosphate) teichoic acid biosynthesis. Catalyzes the transfer of the cytidylyl group of CTP to D-ribitol 5-phosphate. The chain is Ribitol-5-phosphate cytidylyltransferase from Listeria monocytogenes serotype 4b (strain F2365).